The chain runs to 419 residues: MDKFRVQGPTRLQGEVTISGAKNAALPILFAALLAEEPVEIQNVPKLKDIDTTMKLLTQLGTKVERNGSVWIDASNVNNFSAPYDLVKTMRASIWALGPLVARFGQGQVSLPGGCAIGARPVDLHIFGLEKLGAEIKLEEGYVKASVNGRLKGAHIVMDKVSVGATVTIMSAATLAEGTTIIENAAREPEIVDTANFLVALGAKISGQGTDRITIEGVERLGGGVYRVLPDRIETGTFLVAAAISGGKIVCRNAQPDTLDAVLAKLREAGADIETGEDWISLDMHGKRPKAVTVRTAPHPAFPTDMQAQFTLLNLVAEGTGVITETIFENRFMHVPELIRMGAHAEIESNTVICHGVEKLSGAQVMATDLRASASLVLAGCIAEGTTVVDRIYHIDRGYERIEDKLRALGANIERVKGE.

Residue 22–23 (KN) participates in phosphoenolpyruvate binding. Residue R91 participates in UDP-N-acetyl-alpha-D-glucosamine binding. Catalysis depends on C115, which acts as the Proton donor. Residue C115 is modified to 2-(S-cysteinyl)pyruvic acid O-phosphothioketal. UDP-N-acetyl-alpha-D-glucosamine-binding positions include 120–124 (RPVDL), 160–163 (KVSV), D305, and I327.

This sequence belongs to the EPSP synthase family. MurA subfamily.

The protein localises to the cytoplasm. It catalyses the reaction phosphoenolpyruvate + UDP-N-acetyl-alpha-D-glucosamine = UDP-N-acetyl-3-O-(1-carboxyvinyl)-alpha-D-glucosamine + phosphate. Its pathway is cell wall biogenesis; peptidoglycan biosynthesis. With respect to regulation, in vitro inhibited by covalent binding of fosfomycin and the fungal product terreic acid in the presence of substrate UDP-N-acetylglucosamine, with an inactivation rate constant of 130 M(-1)sec(-1) for terreic acid. Functionally, cell wall formation. Adds enolpyruvyl to UDP-N-acetylglucosamine. Target for the antibiotic fosfomycin. This Enterobacter cloacae subsp. cloacae (strain ATCC 13047 / DSM 30054 / NBRC 13535 / NCTC 10005 / WDCM 00083 / NCDC 279-56) protein is UDP-N-acetylglucosamine 1-carboxyvinyltransferase.